We begin with the raw amino-acid sequence, 182 residues long: Large ribosomal subunit protein uL6 (182 aa).

This sequence belongs to the universal ribosomal protein uL6 family. As to quaternary structure, part of the 50S ribosomal subunit.

In terms of biological role, this protein binds to the 23S rRNA, and is important in its secondary structure. It is located near the subunit interface in the base of the L7/L12 stalk, and near the tRNA binding site of the peptidyltransferase center. The polypeptide is Large ribosomal subunit protein uL6 (Nostoc punctiforme (strain ATCC 29133 / PCC 73102)).